A 436-amino-acid polypeptide reads, in one-letter code: GTPase Der (436 aa).

2 EngA-type G domains span residues 4–167 (PVIA…PKIE) and 176–351 (IRFS…ESHS). GTP is bound by residues 10–17 (GRPNVGKS), 57–61 (DTGGI), 119–122 (NKVD), 182–189 (GRPNVGKS), 229–233 (DTAGM), and 294–297 (NKWD). Residues 352-436 (IRVQTNVLND…PIHIIARARD (85 aa)) enclose the KH-like domain.

Belongs to the TRAFAC class TrmE-Era-EngA-EngB-Septin-like GTPase superfamily. EngA (Der) GTPase family. As to quaternary structure, associates with the 50S ribosomal subunit.

In terms of biological role, GTPase that plays an essential role in the late steps of ribosome biogenesis. The sequence is that of GTPase Der from Bacillus mycoides (strain KBAB4) (Bacillus weihenstephanensis).